A 320-amino-acid chain; its full sequence is Cytochrome f (320 aa).

An N-terminal signal peptide occupies residues 1–35; that stretch reads MQTRNTFSWIKEQITRSISASLMIYIITRTSISNA. The heme site is built by tyrosine 36, cysteine 56, cysteine 59, and histidine 60. Residues 286-306 form a helical membrane-spanning segment; it reads VQGLLFFFAAVILAQIFLVLK.

Belongs to the cytochrome f family. The 4 large subunits of the cytochrome b6-f complex are cytochrome b6, subunit IV (17 kDa polypeptide, petD), cytochrome f and the Rieske protein, while the 4 small subunits are PetG, PetL, PetM and PetN. The complex functions as a dimer. Requires heme as cofactor.

It localises to the plastid. It is found in the chloroplast thylakoid membrane. In terms of biological role, component of the cytochrome b6-f complex, which mediates electron transfer between photosystem II (PSII) and photosystem I (PSI), cyclic electron flow around PSI, and state transitions. This chain is Cytochrome f, found in Helianthus annuus (Common sunflower).